Consider the following 105-residue polypeptide: Antithrombin-III (105 aa).

The signal sequence occupies residues 1-17 (MHLFIGVSLRPLGHGIP). The segment at 38 to 105 (ICIYRNPEKK…MRRTSSCRPS (68 aa)) is disordered. Basic and acidic residues predominate over residues 43 to 53 (NPEKKPQERRG).

The protein belongs to the serpin family. In terms of assembly, forms protease inhibiting heterodimer with TMPRSS7. Plasma.

Its subcellular location is the secreted. The protein localises to the extracellular space. Functionally, most important serine protease inhibitor in plasma that regulates the blood coagulation cascade. AT-III inhibits thrombin, matriptase-3/TMPRSS7, as well as factors IXa, Xa and XIa. Its inhibitory activity is greatly enhanced in the presence of heparin. This Gallus gallus (Chicken) protein is Antithrombin-III (SERPINC1).